The primary structure comprises 1683 residues: Phospholipase D1 (1683 aa).

Disordered regions lie at residues 1 to 150, 173 to 198, 259 to 289, and 384 to 416; these read MSNV…AYTQ, LKSS…QQVN, ILDI…SIPR, and VMEK…NITS. Ser-2 bears the N-acetylserine mark. 2 positions are modified to phosphoserine: Ser-8 and Ser-30. 3 stretches are compositionally biased toward basic and acidic residues: residues 20–34, 63–82, and 90–112; these read SVTE…RPDE, NGKE…DRNL, and SLDH…ENMH. The span at 116-125 shows a compositional bias: low complexity; it reads NNLHSSNNNV. Positions 141 to 150 are enriched in polar residues; sequence RRSSSVAYTQ. Phosphoserine is present on Ser-145. Over residues 263–279 the composition is skewed to low complexity; it reads TNSNHNHRGNNNNNTGE. The PX domain occupies 291 to 487; it reads SSIISISSNV…EFYELSPLGN (197 aa). A compositionally biased stretch (polar residues) spans 392 to 404; sequence KPSSAASAPHTSE. The span at 405-416 shows a compositional bias: low complexity; it reads NNNNDNGSNITS. Residues 496–664 enclose the PH domain; it reads QGKQGYLVIR…SSIIKMSTST (169 aa). 2 PLD phosphodiesterase domains span residues 791-818 and 1091-1118; these read YFWA…CYGR and EQLY…NERS. Active-site residues include His-796, Lys-798, Asp-803, His-1096, Lys-1098, and Asp-1103. Positions 1430–1465 are disordered; that stretch reads KDMRRHLSSSTESTRNGSNSLPLNEKSNEGESTNVD. Positions 1437–1451 are enriched in polar residues; sequence SSSTESTRNGSNSLP. Ser-1461 is subject to Phosphoserine. Thr-1462 carries the phosphothreonine modification.

It belongs to the phospholipase D family. In terms of assembly, interacts with SRF1.

The enzyme catalyses a 1,2-diacyl-sn-glycero-3-phosphocholine + H2O = a 1,2-diacyl-sn-glycero-3-phosphate + choline + H(+). Activity is dependent of phosphatidylinositol 4,5-bisphosphate and the regulator SRF1. Inhibited by magnesium. In terms of biological role, required for meiosis and spore formation. Seems to be involved in the coordinate induction of late meiotic events. PLD activity is induced under sporulation conditions and seems to be necessary to complete the meiotic cycle, but not for vegetative cell growth. The polypeptide is Phospholipase D1 (SPO14) (Saccharomyces cerevisiae (strain ATCC 204508 / S288c) (Baker's yeast)).